The primary structure comprises 134 residues: Small ribosomal subunit protein uS11 (134 aa).

Residues 114-134 form a disordered region; the sequence is DVTPVPSDSTRRKGGRRGRRL. Basic residues predominate over residues 125 to 134; that stretch reads RKGGRRGRRL.

The protein belongs to the universal ribosomal protein uS11 family.

The chain is Small ribosomal subunit protein uS11 (RPS14) from Candida albicans (Yeast).